A 441-amino-acid polypeptide reads, in one-letter code: MFLIWTFIVAVLAIQTKSVVAQSCRTPNGLNGNCVSVYECQALLAILNNQRRTQQDEKFLRDSQCGTKNSVPAVCCPCNAADGQQGNCVNINSCPYVLQLLKNPNEANLNYVRGSVCQGSEQQSICCVTAPQSTAVTTTPRPKRVHACQSEMTATPPNPEGKCCGRDIAVGDKIVGGAPASIDSYPWLVVIEYVRLERTMLLCGGALISGKYVLTAGHCVKGAILDVGTPKTVRLGEYNTTNPGRDCVSVSAGGTDCTDPLVKIGIEKTIPHPDYQPYHFLRKHDIGLIRLQSIAPFTDFIRPICLPSTDYTVNPPSKFALTVAGWGRYLQFDNGTVRSSKIKLHVTLPFVQRDVCEANQKPLRNGQRITLWKGQMCAGGEAGKDSCKGDSGGPLMYEHSKKYEAVGIVSFGPEKCGQIDIPGVYTNVYEYLPWIQNTIEP.

The signal sequence occupies residues 1–21; the sequence is MFLIWTFIVAVLAIQTKSVVA. The residue at position 22 (Q22) is a Pyrrolidone carboxylic acid. Clip domains lie at 23-76 and 77-127; these read SCRT…AVCC and PCNA…SICC. Disulfide bonds link C24–C75, C34–C65, C40–C76, C78–C126, C88–C117, C94–C127, C164–C305, and C203–C219. The region spanning 174–440 is the Peptidase S1 domain; the sequence is IVGGAPASID…YLPWIQNTIE (267 aa). H218 functions as the Charge relay system in the catalytic mechanism. Residues E237, N239, N242, and D246 each contribute to the Ca(2+) site. N239 carries N-linked (GlcNAc...) asparagine glycosylation. D285 functions as the Charge relay system in the catalytic mechanism. N334 carries N-linked (GlcNAc...) asparagine glycosylation. Disulfide bonds link C356-C377 and C387-C416. Residue S391 is the Charge relay system of the active site.

It belongs to the peptidase S1 family. CLIP subfamily. In terms of assembly, in the active form, heterodimer of a light chain and a heavy chain; disulfide-linked. In terms of processing, proteolytically cleaved for activation. Cleavage produces a light chain and a catalytic heavy chain which remains covalently associated probably through an interchain disulfide bond. Glycosylated.

Stabilized by calcium. Inhibited by di-isopropyl phosphorofluoridate (DFP), phenylmethanesulfonylfluoride (PMSF), p-nitrophenyl-p'-guanidinobenzonate (p-NPGB), p-chloromercuribenzoate (PCMB), ethylenediaminetetraacetic acid (EDTA), urea and CI-13c. Functionally, endopeptidase with selective post-Arg cleavage site. Activates prophenoloxidase. Has a probable role in the melanization process as part of the innate immune response. This chain is Phenoloxidase-activating enzyme, found in Bombyx mori (Silk moth).